The sequence spans 69 residues: Regulatory protein MokC (69 aa).

The helical transmembrane segment at 24–44 (KAMIVALIVICITAVVAALVT) threads the bilayer.

Belongs to the Hok/Gef family.

The protein resides in the cell inner membrane. In terms of biological role, might be the toxic component of a type I toxin-antitoxin (TA) system. Regulatory peptide which completely overlaps hokC and enables hokC expression. In Escherichia coli (strain K12), this protein is Regulatory protein MokC (mokC).